The chain runs to 495 residues: Glycogen synthase (495 aa).

Lys24 lines the ADP-alpha-D-glucose pocket.

The protein belongs to the glycosyltransferase 1 family. Bacterial/plant glycogen synthase subfamily.

It carries out the reaction [(1-&gt;4)-alpha-D-glucosyl](n) + ADP-alpha-D-glucose = [(1-&gt;4)-alpha-D-glucosyl](n+1) + ADP + H(+). Its pathway is glycan biosynthesis; glycogen biosynthesis. In terms of biological role, synthesizes alpha-1,4-glucan chains using ADP-glucose. This chain is Glycogen synthase, found in Nitrosomonas europaea (strain ATCC 19718 / CIP 103999 / KCTC 2705 / NBRC 14298).